A 458-amino-acid chain; its full sequence is tRNA modification GTPase MnmE (458 aa).

(6S)-5-formyl-5,6,7,8-tetrahydrofolate contacts are provided by R26, E88, and R127. The 155-residue stretch at 224 to 378 (GLSTAIIGRP…IEDRINQLFF (155 aa)) folds into the TrmE-type G domain. N234 contributes to the K(+) binding site. Residues 234–239 (NVGKSS), 253–259 (TDIAGTT), and 278–281 (DTAG) contribute to the GTP site. S238 provides a ligand contact to Mg(2+). K(+) is bound by residues T253, I255, and T258. T259 provides a ligand contact to Mg(2+). K458 provides a ligand contact to (6S)-5-formyl-5,6,7,8-tetrahydrofolate.

The protein belongs to the TRAFAC class TrmE-Era-EngA-EngB-Septin-like GTPase superfamily. TrmE GTPase family. In terms of assembly, homodimer. Heterotetramer of two MnmE and two MnmG subunits. K(+) serves as cofactor.

It localises to the cytoplasm. Functionally, exhibits a very high intrinsic GTPase hydrolysis rate. Involved in the addition of a carboxymethylaminomethyl (cmnm) group at the wobble position (U34) of certain tRNAs, forming tRNA-cmnm(5)s(2)U34. The sequence is that of tRNA modification GTPase MnmE from Streptococcus pyogenes serotype M12 (strain MGAS9429).